Consider the following 156-residue polypeptide: 3-hydroxyacyl-[acyl-carrier-protein] dehydratase FabZ (156 aa).

The active site involves H54.

The protein belongs to the thioester dehydratase family. FabZ subfamily.

The protein resides in the cytoplasm. The enzyme catalyses a (3R)-hydroxyacyl-[ACP] = a (2E)-enoyl-[ACP] + H2O. Functionally, involved in unsaturated fatty acids biosynthesis. Catalyzes the dehydration of short chain beta-hydroxyacyl-ACPs and long chain saturated and unsaturated beta-hydroxyacyl-ACPs. This chain is 3-hydroxyacyl-[acyl-carrier-protein] dehydratase FabZ, found in Koribacter versatilis (strain Ellin345).